The following is a 694-amino-acid chain: Maintenance of telomere capping protein 4 (694 aa).

The span at 1-12 (MTHTNEHDHKAE) shows a compositional bias: basic and acidic residues. Positions 1–26 (MTHTNEHDHKAEQQQNGRGDTTTETV) are disordered. A compositionally biased stretch (polar residues) spans 13-26 (QQQNGRGDTTTETV). A Phosphoserine modification is found at Ser-85. The span at 211–222 (YSPSNESSGSSS) shows a compositional bias: low complexity. Disordered stretches follow at residues 211–287 (YSPS…PEAQ), 325–437 (AKGS…TETY), and 465–511 (KTSN…PVGL). A compositionally biased stretch (basic residues) spans 223 to 243 (SRRHHGHHIHPRRHLQHHSRV). Residues 244–257 (RTANSVHSNTQSLT) show a composition bias toward polar residues. At Thr-263 the chain carries Phosphothreonine. A compositionally biased stretch (polar residues) spans 276-287 (MITKIATTPEAQ). Over residues 403 to 417 (SNGGTSRRSSNNGES) the composition is skewed to low complexity. Residues 418 to 437 (ISTNSSKSSMGITFGNTETY) show a composition bias toward polar residues. Positions 471 to 485 (LRAEGEQALESDKEL) are enriched in basic and acidic residues. Residues Ser-481 and Ser-491 each carry the phosphoserine modification. A Phosphotyrosine modification is found at Tyr-493. Residues 655-675 (RLLEFGIVLVLWTIWFLFSVL) traverse the membrane as a helical segment.

It is found in the membrane. Its subcellular location is the cytoplasm. This chain is Maintenance of telomere capping protein 4 (MTC4), found in Saccharomyces cerevisiae (strain ATCC 204508 / S288c) (Baker's yeast).